We begin with the raw amino-acid sequence, 881 residues long: Sodium/potassium/calcium exchanger Nckx30C (881 aa).

Over 1 to 194 the chain is Extracellular; sequence MLQPTTCSKQ…SRCRSRRCLR (194 aa). Asn69 carries an N-linked (GlcNAc...) asparagine glycan. Disordered regions lie at residues 79–111, 149–181, 215–255, and 272–315; these read DMLSAGRSRSSSTTIDFNSRRRRGRLRGHAPSD, AKTRSRTAAQLPATSAASATSSRGASAEQLLHP, AAKP…TSGE, and GLEE…TTKT. The span at 85 to 95 shows a compositional bias: polar residues; the sequence is RSRSSSTTIDF. The segment covering 149–175 has biased composition (low complexity); sequence AKTRSRTAAQLPATSAASATSSRGASA. The helical transmembrane segment at 195-215 threads the bilayer; the sequence is LPIYSILLLCLTTQGLGLGDA. Residues 216 to 330 lie on the Cytoplasmic side of the membrane; sequence AKPRPAKQHF…DLFTKEQLEN (115 aa). Low complexity predominate over residues 228 to 240; sequence SNSNSPNQNQNHN. Over residues 296–315 the composition is skewed to polar residues; sequence AGNQRGINDTHNDNSTTTKT. The chain crosses the membrane as a helical span at residues 331-351; sequence GAVILHIIGVIYMFVALAIVC. Residues 352–375 lie on the Extracellular side of the membrane; the sequence is DEFFVPSLDVIIEKLGITDDVAGA. Residues 372–412 form an Alpha-1 repeat; sequence VAGATFMAAGGSAPELFTSVIGVFVSFDDVGIGTIVGSAVF. The helical transmembrane segment at 376–396 threads the bilayer; it reads TFMAAGGSAPELFTSVIGVFV. The Cytoplasmic portion of the chain corresponds to 397 to 402; that stretch reads SFDDVG. A helical membrane pass occupies residues 403–423; it reads IGTIVGSAVFNILFVIGMCAL. Topologically, residues 424–433 are extracellular; sequence FSKTVLSLTW. A helical transmembrane segment spans residues 434 to 454; sequence WPLFRDCSFYSISLLVLIYFF. Residues 455-458 lie on the Cytoplasmic side of the membrane; the sequence is RDNR. A helical transmembrane segment spans residues 459–479; it reads IFWWEALILFTIYIGYVAFMK. Residues 480-720 lie on the Extracellular side of the membrane; the sequence is WNVQVETCVK…PDTRTPRGKR (241 aa). Residues 508 to 565 are disordered; that stretch reads PAGNAANSSETSMATQPGGSVTSRAASETRSGPPGSSNAGATGNSSGGGGTSGSTQTG. Positions 512 to 537 are enriched in polar residues; the sequence is AANSSETSMATQPGGSVTSRAASETR. Asn514 and Asn551 each carry an N-linked (GlcNAc...) asparagine glycan. Residues 542–551 are compositionally biased toward low complexity; it reads GSSNAGATGN. Residues 721–741 traverse the membrane as a helical segment; the sequence is FFPVTFIGSIVWIAAFSYLMV. Over 742–756 the chain is Cytoplasmic; that stretch reads WWANVAGDTARIPPE. A helical membrane pass occupies residues 757-777; that stretch reads VMGLTFLAAGTSIPDLITSVI. The stretch at 764–795 is one Alpha-2 repeat; that stretch reads AAGTSIPDLITSVIVARKGFGDMAVSSSVGSN. The Extracellular segment spans residues 778–795; that stretch reads VARKGFGDMAVSSSVGSN. Residues 796–816 form a helical membrane-spanning segment; the sequence is IFDVTVGLPIPWLLYGIIYGA. Topologically, residues 817 to 822 are cytoplasmic; the sequence is PVEVNS. Residues 823–843 traverse the membrane as a helical segment; sequence VGMVCSITILFMMLVFVVMSI. At 844–852 the chain is on the extracellular side; sequence ACFRWRMNK. The chain crosses the membrane as a helical span at residues 853–873; the sequence is GLGFTMFLLYFAFVAVSLMFE. The Cytoplasmic portion of the chain corresponds to 874–881; the sequence is YDVITCPF.

This sequence belongs to the Ca(2+):cation antiporter (CaCA) (TC 2.A.19) family. SLC24A subfamily. Expressed in the adult nervous system. Expressed in the photoreceptor cells as well as in the lamina, medulla, and optic lobes of the brain.

The protein localises to the membrane. In terms of biological role, may function in the removal and maintenance of calcium homeostasis during signaling in the adult and in signaling events during embryogenesis and patterning of imaginal disks. Transports one Ca(2+) and 1 K(+) in exchange for 4 Na(+). This is Sodium/potassium/calcium exchanger Nckx30C (Nckx30C) from Drosophila melanogaster (Fruit fly).